Here is a 407-residue protein sequence, read N- to C-terminus: Multifunctional CCA protein (407 aa).

ATP contacts are provided by glycine 8 and arginine 11. Residues glycine 8 and arginine 11 each contribute to the CTP site. Residues aspartate 21 and aspartate 23 each coordinate Mg(2+). Arginine 91, arginine 137, and arginine 140 together coordinate ATP. Positions 91, 137, and 140 each coordinate CTP. One can recognise an HD domain in the interval 228–329; sequence TGIHTLLVAE…VKIFNKLDVW (102 aa).

The protein belongs to the tRNA nucleotidyltransferase/poly(A) polymerase family. Bacterial CCA-adding enzyme type 1 subfamily. As to quaternary structure, monomer. Can also form homodimers and oligomers. Mg(2+) serves as cofactor. Ni(2+) is required as a cofactor.

It carries out the reaction a tRNA precursor + 2 CTP + ATP = a tRNA with a 3' CCA end + 3 diphosphate. It catalyses the reaction a tRNA with a 3' CCA end + 2 CTP + ATP = a tRNA with a 3' CCACCA end + 3 diphosphate. Catalyzes the addition and repair of the essential 3'-terminal CCA sequence in tRNAs without using a nucleic acid template. Adds these three nucleotides in the order of C, C, and A to the tRNA nucleotide-73, using CTP and ATP as substrates and producing inorganic pyrophosphate. tRNA 3'-terminal CCA addition is required both for tRNA processing and repair. Also involved in tRNA surveillance by mediating tandem CCA addition to generate a CCACCA at the 3' terminus of unstable tRNAs. While stable tRNAs receive only 3'-terminal CCA, unstable tRNAs are marked with CCACCA and rapidly degraded. The chain is Multifunctional CCA protein from Vibrio vulnificus (strain YJ016).